The chain runs to 197 residues: Putative peptidyl-prolyl cis-trans isomerase (197 aa).

The 182-residue stretch at 14 to 195 folds into the PPIase cyclophilin-type domain; it reads GEIKVVMHTN…HDVVIESIDV (182 aa).

The protein belongs to the cyclophilin-type PPIase family.

The catalysed reaction is [protein]-peptidylproline (omega=180) = [protein]-peptidylproline (omega=0). Its function is as follows. PPIases accelerate the folding of proteins. It catalyzes the cis-trans isomerization of proline imidic peptide bonds in oligopeptides. This is Putative peptidyl-prolyl cis-trans isomerase from Staphylococcus aureus (strain bovine RF122 / ET3-1).